A 188-amino-acid chain; its full sequence is Large ribosomal subunit protein eL18 (188 aa).

A Glycyl lysine isopeptide (Lys-Gly) (interchain with G-Cter in SUMO2) cross-link involves residue K119. S130 bears the Phosphoserine mark. The disordered stretch occupies residues 150-188 (RHFGKAPGTPHSHTKPYVRSKGRKFERARGRRASRGYKN). T158 bears the Phosphothreonine mark. Basic residues-rich tracts occupy residues 161–171 (SHTKPYVRSKG) and 178–188 (RGRRASRGYKN). Residue K164 forms a Glycyl lysine isopeptide (Lys-Gly) (interchain with G-Cter in SUMO2) linkage.

The protein belongs to the eukaryotic ribosomal protein eL18 family. As to quaternary structure, component of the large ribosomal subunit.

The protein resides in the cytoplasm. Its subcellular location is the cytosol. It localises to the rough endoplasmic reticulum. Its function is as follows. Component of the large ribosomal subunit. The ribosome is a large ribonucleoprotein complex responsible for the synthesis of proteins in the cell. The chain is Large ribosomal subunit protein eL18 (RPL18) from Bos taurus (Bovine).